The following is a 250-amino-acid chain: MADS-box protein J2 (250 aa).

In terms of domain architecture, MADS-box spans 1–61 (MGRGRVELKR…GKLYEFSSAS (61 aa)). Residues 87–177 (TQMNYNEYVR…KNKLEESAAR (91 aa)) enclose the K-box domain.

The protein resides in the nucleus. In terms of biological role, MADS-box transcription factor that acts redundantly with EJ2 to control meristem maturation and inflorescence architecture. In Solanum lycopersicum (Tomato), this protein is MADS-box protein J2.